Consider the following 325-residue polypeptide: MAKVWQFSEAEELFHLPFLDLLYSAQHVHRENFPHNEVQLAMLLSVKTGGCPENCSYCPQSAHYDTGLRKEPVMHVEKVLEAAKRAVELGATRFCIGAAWRGPRGKDLDIVCEMISRIKKLGLETCASLGLLSYEQAVSLKAAGLDFYNHNIDTSQEYYSKIITTRRFSDRIETLENVAKAGLKICSGGILGMGESNEDRIKMLVELSHLSFPPESIPINKLIPIPGTPLAEKNAVDPLDFVRIIALARIMFPKSYVRLSAGRESMSDELQTLCFIAGANSIFYGEKLLTSANSDPESDEKLLLKLGLLREKSKTAVDCSINLGS.

The Radical SAM core domain occupies 36 to 254; the sequence is NEVQLAMLLS…IALARIMFPK (219 aa). Positions 51, 55, and 58 each coordinate [4Fe-4S] cluster. 4 residues coordinate [2Fe-2S] cluster: cysteine 95, cysteine 126, cysteine 186, and arginine 258.

Belongs to the radical SAM superfamily. Biotin synthase family. As to quaternary structure, homodimer. [4Fe-4S] cluster is required as a cofactor. Requires [2Fe-2S] cluster as cofactor.

The enzyme catalyses (4R,5S)-dethiobiotin + (sulfur carrier)-SH + 2 reduced [2Fe-2S]-[ferredoxin] + 2 S-adenosyl-L-methionine = (sulfur carrier)-H + biotin + 2 5'-deoxyadenosine + 2 L-methionine + 2 oxidized [2Fe-2S]-[ferredoxin]. It functions in the pathway cofactor biosynthesis; biotin biosynthesis; biotin from 7,8-diaminononanoate: step 2/2. In terms of biological role, catalyzes the conversion of dethiobiotin (DTB) to biotin by the insertion of a sulfur atom into dethiobiotin via a radical-based mechanism. The sequence is that of Biotin synthase from Neorickettsia sennetsu (strain ATCC VR-367 / Miyayama) (Ehrlichia sennetsu).